The following is a 989-amino-acid chain: DNA-directed RNA polymerase subunit beta' (989 aa).

The Mg(2+) site is built by Asp383, Asp385, and Asp387.

Belongs to the RNA polymerase beta' chain family. As to quaternary structure, the RNAP catalytic core consists of 2 alpha, 1 beta, 1 beta' and 1 omega subunit. When a sigma factor is associated with the core the holoenzyme is formed, which can initiate transcription. Requires Mg(2+) as cofactor.

The catalysed reaction is RNA(n) + a ribonucleoside 5'-triphosphate = RNA(n+1) + diphosphate. DNA-dependent RNA polymerase catalyzes the transcription of DNA into RNA using the four ribonucleoside triphosphates as substrates. This Leuconostoc pseudomesenteroides protein is DNA-directed RNA polymerase subunit beta' (rpoC).